A 491-amino-acid chain; its full sequence is Stage IV sporulation protein A (491 aa).

The Walker A motif; involved in ATP-binding signature appears at 23–30 (GPVRTGKS). 23-30 (GPVRTGKS) lines the ATP pocket. Positions 334–362 (QLLSLITRLSKVKNEYDKIESALIDAKIK) form a coiled coil.

In terms of assembly, interacts (via Walker A motif) with SipL (via C-terminus LysM domain).

It is found in the cytoplasm. It carries out the reaction ATP + H2O = ADP + phosphate + H(+). Functionally, ATPase. Has a role at an early stage in the morphogenesis of the spore coat and is required for proper coat localization to the forespore. This chain is Stage IV sporulation protein A, found in Clostridioides difficile (strain 630) (Peptoclostridium difficile).